A 333-amino-acid polypeptide reads, in one-letter code: Probable tRNA pseudouridine synthase B (333 aa).

The active-site Nucleophile is D66. Residues 233 to 308 (LKKIIIKDSA…EVVEITRVIM (76 aa)) form the PUA domain.

The protein belongs to the pseudouridine synthase TruB family. Type 2 subfamily.

It carries out the reaction uridine(55) in tRNA = pseudouridine(55) in tRNA. Its function is as follows. Could be responsible for synthesis of pseudouridine from uracil-55 in the psi GC loop of transfer RNAs. The polypeptide is Probable tRNA pseudouridine synthase B (Methanococcus maripaludis (strain DSM 14266 / JCM 13030 / NBRC 101832 / S2 / LL)).